We begin with the raw amino-acid sequence, 490 residues long: Probable cytosol aminopeptidase (490 aa).

Lys262 and Asp267 together coordinate Mn(2+). The active site involves Lys274. Mn(2+)-binding residues include Asp285, Asp344, and Glu346. Arg348 is a catalytic residue.

It belongs to the peptidase M17 family. Mn(2+) is required as a cofactor.

Its subcellular location is the cytoplasm. It catalyses the reaction Release of an N-terminal amino acid, Xaa-|-Yaa-, in which Xaa is preferably Leu, but may be other amino acids including Pro although not Arg or Lys, and Yaa may be Pro. Amino acid amides and methyl esters are also readily hydrolyzed, but rates on arylamides are exceedingly low.. The enzyme catalyses Release of an N-terminal amino acid, preferentially leucine, but not glutamic or aspartic acids.. Functionally, presumably involved in the processing and regular turnover of intracellular proteins. Catalyzes the removal of unsubstituted N-terminal amino acids from various peptides. The chain is Probable cytosol aminopeptidase from Mannheimia succiniciproducens (strain KCTC 0769BP / MBEL55E).